Consider the following 47-residue polypeptide: Capistruin (47 aa).

Residues 1 to 28 constitute a propeptide that is removed on maturation; the sequence is MVRLLAKLLRSTIHGSNGVSLDAVSSTH. Positions 29–37 form a cross-link, isoaspartyl glycine isopeptide (Gly-Asp); that stretch reads GTPGFQTPD.

Post-translationally, it is assumed that the two processing enzymes CapB/CapC convert the precursor protein CapA into the mature lasso peptide capistruin. CapB is assumed to cleave the precursor protein CapA and to set an N-terminal Gly free, whose a-NH2 group acts as the nucleophile in the subsequent cyclization reaction. CapC is most likely involved in the side-chain carboxyl group activation of aspartic acid at position 9 generating the electrophile for the condensation reaction. CapD may export capistruin outside of the producing cells.

The protein localises to the secreted. Peptide antibiotic that functions through inhibition of the bacterial DNA-dependent RNA polymerase (RNAP). Inhibits transcription by binding in RNAP secondary channel, where it sterically blocks the folding of the trigger loop, which is essential for efficient catalysis. In contrast to MccJ25, does not restrict access of nucleotide substrates to the catalytic center and shows a non-competitive mode of inhibition. Shows activity against closely related Gram-negative Burkholderia and Pseudomonas strains. Is not active against Gram-positive bacteria. The protein is Capistruin of Burkholderia thailandensis (strain ATCC 700388 / DSM 13276 / CCUG 48851 / CIP 106301 / E264).